Reading from the N-terminus, the 297-residue chain is Tyrosine recombinase XerD (297 aa).

The Core-binding (CB) domain maps to 1–86 (MNDLIEDFLH…SLRSFFHYLM (86 aa)). The Tyr recombinase domain maps to 107–291 (GLPKVLNLDD…TKLRLKDVYK (185 aa)). Catalysis depends on residues R147, K171, H243, R246, and H269. The active-site O-(3'-phospho-DNA)-tyrosine intermediate is the Y278.

It belongs to the 'phage' integrase family. XerD subfamily. As to quaternary structure, forms a cyclic heterotetrameric complex composed of two molecules of XerC and two molecules of XerD.

It is found in the cytoplasm. In terms of biological role, site-specific tyrosine recombinase, which acts by catalyzing the cutting and rejoining of the recombining DNA molecules. The XerC-XerD complex is essential to convert dimers of the bacterial chromosome into monomers to permit their segregation at cell division. It also contributes to the segregational stability of plasmids. The polypeptide is Tyrosine recombinase XerD (Listeria monocytogenes serovar 1/2a (strain ATCC BAA-679 / EGD-e)).